We begin with the raw amino-acid sequence, 239 residues long: Adapter protein MecA (239 aa).

Residues 118–128 show a composition bias toward basic and acidic residues; sequence EQRTKEKEAQG. Residues 118 to 137 form a disordered region; it reads EQRTKEKEAQGSKRQKSSAR.

Belongs to the MecA family. Homodimer.

In terms of biological role, enables the recognition and targeting of unfolded and aggregated proteins to the ClpC protease or to other proteins involved in proteolysis. This chain is Adapter protein MecA, found in Staphylococcus aureus (strain JH1).